Consider the following 257-residue polypeptide: Protein YIPF5 (257 aa).

The Cytoplasmic segment spans residues 1–124; that stretch reads MSGFDNFNTD…KASDGSIMNE (124 aa). Residues 125 to 145 traverse the membrane as a helical segment; it reads TDLAGPMVFCLAFGATLLLTG. Residue lysine 146 is a topological domain, lumenal. Residues 147–167 form a helical membrane-spanning segment; the sequence is IQFGYVYGISAIGCLGMYCLL. Topologically, residues 168–173 are cytoplasmic; it reads NLMSMT. The chain crosses the membrane as a helical span at residues 174-194; sequence GVSFGCVASVLGYCLLPMIIL. Residues 195–196 are Lumenal-facing; sequence SS. A helical membrane pass occupies residues 197–217; it reads FGVIFSLQGIMGIILTAAIIG. Residues 218 to 236 are Cytoplasmic-facing; that stretch reads WCSLSASKIFISALAMDGQ. Residues 237–257 traverse the membrane as a helical segment; sequence QLLVAYPCALLYGVFALISVF.

The protein belongs to the YIP1 family.

It is found in the endoplasmic reticulum membrane. The protein localises to the golgi apparatus. It localises to the cis-Golgi network membrane. Plays a role in transport between endoplasmic reticulum and Golgi. This Danio rerio (Zebrafish) protein is Protein YIPF5 (yipf5).